Reading from the N-terminus, the 699-residue chain is Polyribonucleotide nucleotidyltransferase (699 aa).

The Mg(2+) site is built by D485 and D491. The KH domain maps to 552–611 (PRITTIKINPEKIRDVIGKGGAVIRALTEETGTTIELEDDGTVKIASNNGDATREAIRRI). Residues 621–689 (GRLYTGKVIR…RQGRVRLSIK (69 aa)) enclose the S1 motif domain.

Belongs to the polyribonucleotide nucleotidyltransferase family. In terms of assembly, component of the RNA degradosome, which is a multiprotein complex involved in RNA processing and mRNA degradation. Requires Mg(2+) as cofactor.

It is found in the cytoplasm. The catalysed reaction is RNA(n+1) + phosphate = RNA(n) + a ribonucleoside 5'-diphosphate. Involved in mRNA degradation. Catalyzes the phosphorolysis of single-stranded polyribonucleotides processively in the 3'- to 5'-direction. The protein is Polyribonucleotide nucleotidyltransferase of Shewanella amazonensis (strain ATCC BAA-1098 / SB2B).